The following is a 144-amino-acid chain: UPF0306 protein Spro_0510 (144 aa).

This sequence belongs to the UPF0306 family.

This chain is UPF0306 protein Spro_0510, found in Serratia proteamaculans (strain 568).